The chain runs to 257 residues: uncharacterized protein (257 aa).

7–14 contacts ATP; sequence GKGGVGKT.

This sequence to M.jannaschii MJ0084 and MJ0685.

This is an uncharacterized protein from Methanocaldococcus jannaschii (strain ATCC 43067 / DSM 2661 / JAL-1 / JCM 10045 / NBRC 100440) (Methanococcus jannaschii).